The following is a 101-amino-acid chain: Protein snet-1 (101 aa).

The N-terminal stretch at 1 to 20 (MARFTPLLMILLALVPLYYS) is a signal peptide.

May be degraded by the nep-2 peptidase. In terms of tissue distribution, expressed in coelomocytes, the ASK sensory neurons and interneurons AIB, AIM and PVQ.

It is found in the secreted. The protein resides in the perikaryon. Functionally, negatively regulates chemotaxis and olfactory plasticity which is the change from positive chemotaxis to dispersal after prolonged exposure to an odorant. May be down-regulated in response to pheromone exposure, resulting in promotion of olfactory plasticity. The chain is Protein snet-1 from Caenorhabditis elegans.